A 567-amino-acid polypeptide reads, in one-letter code: Proton-coupled zinc antiporter SLC30A9, mitochondrial (567 aa).

Transmembrane regions (helical) follow at residues V238–I258, G313–L333, L341–V361, V391–G411, and S423–T443. Residues L461 to L465 carry the LXXLL motif motif.

The protein belongs to the cation diffusion facilitator (CDF) transporter (TC 2.A.4) family. SLC30A subfamily. Interacts with GRIP1, ESR1, AR and CTNNB1.

It localises to the mitochondrion membrane. Its subcellular location is the nucleus. The protein resides in the endoplasmic reticulum. It catalyses the reaction Zn(2+)(in) + 2 H(+)(out) = Zn(2+)(out) + 2 H(+)(in). In terms of biological role, acts as a zinc transporter involved in intracellular zinc homeostasis. Functions as a secondary coactivator for nuclear receptors by cooperating with p160 coactivators subtypes. Plays a role in transcriptional activation of Wnt-responsive genes. Its function is as follows. Mitochondrial proton-coupled zinc ion antiporter mediating the export of zinc from the mitochondria and involved in zinc homeostasis, zinc mobilization as well as mitochondrial morphology and health. In nucleus, functions as a secondary coactivator for nuclear receptors by cooperating with p160 coactivators subtypes. Plays a role in transcriptional activation of Wnt-responsive genes. The chain is Proton-coupled zinc antiporter SLC30A9, mitochondrial (Slc30a9) from Mus musculus (Mouse).